A 258-amino-acid polypeptide reads, in one-letter code: Regulatory protein RecX (258 aa).

This sequence belongs to the RecX family.

It localises to the cytoplasm. In terms of biological role, modulates RecA activity. The chain is Regulatory protein RecX from Streptococcus pyogenes serotype M2 (strain MGAS10270).